The sequence spans 584 residues: Protein DENND6A (584 aa).

The tract at residues 1-23 (MALWERGAGGAAEAGEDATEEPE) is disordered. Residues 39–218 (HCVCVVGFDL…KLRIPTYRDK (180 aa)) enclose the uDENN domain. Residues 244 to 369 (EVDLFRCFCP…VKVKKLKNLK (126 aa)) enclose the cDENN domain. Residues 371 to 504 (LDSKPGVYTS…RSRQKEMTQN (134 aa)) form the dDENN domain.

It belongs to the DENND6 family.

The protein localises to the recycling endosome. It localises to the cytoplasm. In terms of biological role, guanine nucleotide exchange factor (GEF) for RAB14. The chain is Protein DENND6A (DENND6A) from Gallus gallus (Chicken).